Consider the following 80-residue polypeptide: Defensin-like protein 13 (80 aa).

An N-terminal signal peptide occupies residues 1–29; it reads MAKSATIVTLFFAALVFFAALEAPMVVEA. Residue Q30 is modified to Pyrrolidone carboxylic acid. 4 disulfides stabilise this stretch: C33-C80, C44-C65, C50-C74, and C54-C76.

This sequence belongs to the DEFL family. As to quaternary structure, forms oligomers in its native state. As to expression, expressed predominantly in siliques and dry seeds.

It is found in the secreted. In terms of biological role, confers broad-spectrum resistance to pathogens. Possesses antifungal activity sensitive to inorganic cations in vitro. The chain is Defensin-like protein 13 (PDF1.1) from Arabidopsis thaliana (Mouse-ear cress).